The primary structure comprises 622 residues: Low affinity potassium transport system protein Kup (622 aa).

12 helical membrane-spanning segments follow: residues Ile12–Leu32, Val49–Leu69, Val103–Ile123, Pro137–Ile157, Val165–Leu185, Val213–Ala233, Trp247–Leu267, Pro276–Ala296, Ile337–Phe357, Leu363–Thr383, Phe396–Leu416, and Leu419–Thr439.

This sequence belongs to the HAK/KUP transporter (TC 2.A.72) family.

The protein localises to the cell inner membrane. It catalyses the reaction K(+)(in) + H(+)(in) = K(+)(out) + H(+)(out). In terms of biological role, responsible for the low-affinity transport of potassium into the cell. Likely operates as a K(+):H(+) symporter. This Salmonella gallinarum (strain 287/91 / NCTC 13346) protein is Low affinity potassium transport system protein Kup.